The sequence spans 625 residues: Chaperone protein HtpG (625 aa).

Residues 1–337 (MSTNQETRGF…TNDLPLNVSR (337 aa)) form an a; substrate-binding region. The segment at 338–554 (EILQENKITA…NDEMTTQMAK (217 aa)) is b. Residues 555–625 (LFAAMGQKAP…FIKRMNKLLG (71 aa)) are c.

This sequence belongs to the heat shock protein 90 family. Homodimer.

It localises to the cytoplasm. Functionally, molecular chaperone. Has ATPase activity. This is Chaperone protein HtpG from Actinobacillus pleuropneumoniae serotype 5b (strain L20).